Reading from the N-terminus, the 145-residue chain is Acidic phospholipase A2 homolog textilotoxin C chain (145 aa).

The first 19 residues, 1–19, serve as a signal peptide directing secretion; that stretch reads MHPAHLLVLLGVYVSLLGA. Residues 20–27 constitute a propeptide that is removed on maturation; it reads ARIPPLPL. 7 disulfide bridges follow: Cys38/Cys98, Cys54/Cys144, Cys56/Cys72, Cys71/Cys125, Cys78/Cys118, Cys87/Cys111, and Cys105/Cys116.

The protein belongs to the phospholipase A2 family. Group I subfamily. D49 sub-subfamily. Heterohexamer. 2 forms exist: 2 A or 2 B chains, 2 C chains and 2 covalently-linked D chains, and 1 A or 1 B, 1 C, 2 covalently-linked D chains and 2 differentially glycosylated covalently-linked D chains. Textilotoxin was originally described as pentameric. Expressed by the venom gland.

The protein resides in the secreted. Snake venom oligomeric phospholipase A2 that has potent presynaptic neurotoxicity. Chain C is not itself neurotoxic, but it is essential for the neurotoxicity of textilotoxin. Chain C possesses a very low phospholipase activity. The chain is Acidic phospholipase A2 homolog textilotoxin C chain from Pseudonaja textilis (Eastern brown snake).